We begin with the raw amino-acid sequence, 215 residues long: Ribose-5-phosphate isomerase A (215 aa).

Residues 26-29 (TGST), 79-82 (DGAD), and 92-95 (KGGG) each bind substrate. The active-site Proton acceptor is the Glu-101. Lys-119 lines the substrate pocket.

The protein belongs to the ribose 5-phosphate isomerase family. In terms of assembly, homodimer.

The enzyme catalyses aldehydo-D-ribose 5-phosphate = D-ribulose 5-phosphate. It participates in carbohydrate degradation; pentose phosphate pathway; D-ribose 5-phosphate from D-ribulose 5-phosphate (non-oxidative stage): step 1/1. Catalyzes the reversible conversion of ribose-5-phosphate to ribulose 5-phosphate. In Stenotrophomonas maltophilia (strain R551-3), this protein is Ribose-5-phosphate isomerase A.